The chain runs to 413 residues: Tyrosine--tRNA ligase (413 aa).

The short motif at proline 59–histidine 68 is the 'HIGH' region element. A 'KMSKS' region motif is present at residues lysine 243 to serine 247. Position 246 (lysine 246) interacts with ATP. An S4 RNA-binding domain is found at leucine 351–leucine 411.

The protein belongs to the class-I aminoacyl-tRNA synthetase family. TyrS type 2 subfamily. In terms of assembly, homodimer.

It is found in the cytoplasm. The catalysed reaction is tRNA(Tyr) + L-tyrosine + ATP = L-tyrosyl-tRNA(Tyr) + AMP + diphosphate + H(+). Functionally, catalyzes the attachment of tyrosine to tRNA(Tyr) in a two-step reaction: tyrosine is first activated by ATP to form Tyr-AMP and then transferred to the acceptor end of tRNA(Tyr). The protein is Tyrosine--tRNA ligase of Burkholderia thailandensis (strain ATCC 700388 / DSM 13276 / CCUG 48851 / CIP 106301 / E264).